Reading from the N-terminus, the 114-residue chain is Tyrosine-protein phosphatase 27 (114 aa).

The Tyrosine-protein phosphatase domain maps to 1 to 114 (WQMIVEHKCC…ELGNDNPIVV (114 aa)). Asp82 contacts substrate.

Belongs to the protein-tyrosine phosphatase family.

The catalysed reaction is O-phospho-L-tyrosyl-[protein] + H2O = L-tyrosyl-[protein] + phosphate. The chain is Tyrosine-protein phosphatase 27 (STY-27) from Styela plicata (Wrinkled sea squirt).